Consider the following 800-residue polypeptide: Phenylalanine--tRNA ligase beta subunit (800 aa).

The 116-residue stretch at 39-154 (TKDIKNLVVG…ESQVPGTDAL (116 aa)) folds into the tRNA-binding domain. Residues 408–483 (AFITPIDITA…RIYGYDDIPS (76 aa)) enclose the B5 domain. Mg(2+) is bound by residues Asp-461, Asp-467, Glu-470, and Glu-471. Residues 708–800 (PRFPGMSRDI…ALIEQGAVIR (93 aa)) enclose the FDX-ACB domain.

It belongs to the phenylalanyl-tRNA synthetase beta subunit family. Type 1 subfamily. Tetramer of two alpha and two beta subunits. Mg(2+) serves as cofactor.

It localises to the cytoplasm. The enzyme catalyses tRNA(Phe) + L-phenylalanine + ATP = L-phenylalanyl-tRNA(Phe) + AMP + diphosphate + H(+). The protein is Phenylalanine--tRNA ligase beta subunit of Staphylococcus aureus (strain Mu50 / ATCC 700699).